We begin with the raw amino-acid sequence, 21 residues long: Ocellatin-2 (21 aa).

At Ile21 the chain carries Isoleucine amide.

Expressed by the skin dorsal glands.

The protein localises to the secreted. Functionally, has hemolytic activity against human erythrocytes and antibacterial activity against the Gram-negative bacterium E.coli. This chain is Ocellatin-2, found in Leptodactylus ocellatus (Argus frog).